Here is a 476-residue protein sequence, read N- to C-terminus: Eukaryotic translation initiation factor 3 subunit L (476 aa).

One can recognise a PCI domain in the interval 257–452 (DAIRMFSHIL…DLDYALEKDL (196 aa)).

Belongs to the eIF-3 subunit L family. As to quaternary structure, component of the eukaryotic translation initiation factor 3 (eIF-3) complex.

The protein localises to the cytoplasm. Component of the eukaryotic translation initiation factor 3 (eIF-3) complex, which is involved in protein synthesis of a specialized repertoire of mRNAs and, together with other initiation factors, stimulates binding of mRNA and methionyl-tRNAi to the 40S ribosome. The eIF-3 complex specifically targets and initiates translation of a subset of mRNAs involved in cell proliferation. The polypeptide is Eukaryotic translation initiation factor 3 subunit L (Emericella nidulans (strain FGSC A4 / ATCC 38163 / CBS 112.46 / NRRL 194 / M139) (Aspergillus nidulans)).